A 213-amino-acid polypeptide reads, in one-letter code: uncharacterized protein (213 aa).

This is an uncharacterized protein from Homo sapiens (Human).